Reading from the N-terminus, the 213-residue chain is Adenylate kinase (213 aa).

Residue 10–15 (GAGKGT) participates in ATP binding. Positions 30-59 (STGDMFRAAMANQTEMGVLAKSYIDKGDLV) are NMP. Residues threonine 31, arginine 36, 57-59 (DLV), 86-89 (GYPR), and glutamine 93 each bind AMP. The interval 127–160 (GRIINKKTGETFHKIFNPPVGDYKEEDFYQREDD) is LID. Residues arginine 128 and 137–138 (TF) each bind ATP. AMP-binding residues include arginine 157 and arginine 168. Lysine 196 provides a ligand contact to ATP.

It belongs to the adenylate kinase family. Monomer.

It is found in the cytoplasm. The enzyme catalyses AMP + ATP = 2 ADP. Its pathway is purine metabolism; AMP biosynthesis via salvage pathway; AMP from ADP: step 1/1. Functionally, catalyzes the reversible transfer of the terminal phosphate group between ATP and AMP. Plays an important role in cellular energy homeostasis and in adenine nucleotide metabolism. The polypeptide is Adenylate kinase (Streptococcus equi subsp. zooepidemicus (strain H70)).